Here is a 455-residue protein sequence, read N- to C-terminus: Argininosuccinate lyase (455 aa).

It belongs to the lyase 1 family. Argininosuccinate lyase subfamily.

The protein localises to the cytoplasm. It carries out the reaction 2-(N(omega)-L-arginino)succinate = fumarate + L-arginine. The protein operates within amino-acid biosynthesis; L-arginine biosynthesis; L-arginine from L-ornithine and carbamoyl phosphate: step 3/3. This Shewanella oneidensis (strain ATCC 700550 / JCM 31522 / CIP 106686 / LMG 19005 / NCIMB 14063 / MR-1) protein is Argininosuccinate lyase.